A 94-amino-acid chain; its full sequence is RxLR effector protein PITG_15972 (94 aa).

A signal peptide spans 1-21; that stretch reads MRAVYILAMACAATLQASSSA. The short motif at 50–65 is the RxLR-dEER element; sequence RLLRVEDKEEETEEER.

It belongs to the RxLR effector family.

The protein localises to the secreted. It is found in the host cytoplasm. The protein resides in the host nucleus. In terms of biological role, effector that enhances P.infestans colonization of Nicotiana benthamiana leaves. The polypeptide is RxLR effector protein PITG_15972 (Phytophthora infestans (strain T30-4) (Potato late blight agent)).